The primary structure comprises 407 residues: Serine/threonine transporter SstT (407 aa).

9 helical membrane passes run 11-31 (IIHGSLVLQIIVGIALAVILA), 43-63 (FLGDFFVGALKAIAPILVFVL), 82-102 (IISLYLIGTFAAALTAVLLSF), 141-161 (ALMTGNYIGILAWGIGLGIAL), 192-212 (LGIFGLVAGTVAATGFDALAG), 216-236 (LLMVLVGAMLIMALVVNPLIV), 298-318 (MGGAAITITVLTLAAAHTLGV), 339-359 (ASGVAGGSLLLIPLACSLFGI), and 363-383 (IAMQVVAVGFIIGVVQDSAET).

This sequence belongs to the dicarboxylate/amino acid:cation symporter (DAACS) (TC 2.A.23) family.

The protein resides in the cell inner membrane. The catalysed reaction is L-serine(in) + Na(+)(in) = L-serine(out) + Na(+)(out). It carries out the reaction L-threonine(in) + Na(+)(in) = L-threonine(out) + Na(+)(out). Functionally, involved in the import of serine and threonine into the cell, with the concomitant import of sodium (symport system). The sequence is that of Serine/threonine transporter SstT from Shewanella denitrificans (strain OS217 / ATCC BAA-1090 / DSM 15013).